A 208-amino-acid polypeptide reads, in one-letter code: 3-demethoxyubiquinol 3-hydroxylase (208 aa).

6 residues coordinate Fe cation: Glu57, Glu87, His90, Glu139, Glu171, and His174.

The protein belongs to the COQ7 family. It depends on Fe cation as a cofactor.

It is found in the cell membrane. It carries out the reaction a 5-methoxy-2-methyl-3-(all-trans-polyprenyl)benzene-1,4-diol + AH2 + O2 = a 3-demethylubiquinol + A + H2O. The protein operates within cofactor biosynthesis; ubiquinone biosynthesis. Functionally, catalyzes the hydroxylation of 2-nonaprenyl-3-methyl-6-methoxy-1,4-benzoquinol during ubiquinone biosynthesis. This is 3-demethoxyubiquinol 3-hydroxylase from Nitrosospira multiformis (strain ATCC 25196 / NCIMB 11849 / C 71).